Reading from the N-terminus, the 312-residue chain is MANRTVKDAHSVHGTNPQYLVEKIIRTRIYESKYWKEECFGLTAELVVDKAMELKYVGGVYGGNIKPTPFLCLTLKMLQIQPEKDIIVEFIKNEDFKYVRTLGALYMRLTGTATDCYKYLEPLYNDYRKVKVQNRNGEFELMHVDEFIDQLLHEERVCDVILPRLQKRFVLEETEQLDPRVSALEEDMDDVESSEEEEDEDEKGRDPSPEHHRRNYRDLDRPRRSPSPRYRRSRSRSPRRRSRSPKRRSPSPPRRERHRSKSPRRHRSRSRERRHRSKSKSPGHHRSHRHRSHSKSPERSKKSHKKSRRGNE.

Residues 1–179 (MANRTVKDAH…VLEETEQLDP (179 aa)) are N-terminal protein interaction domain. The disordered stretch occupies residues 180 to 312 (RVSALEEDMD…SHKKSRRGNE (133 aa)). Residues 184–201 (LEEDMDDVESSEEEEDED) show a composition bias toward acidic residues. A compositionally biased stretch (basic and acidic residues) spans 202 to 223 (EKGRDPSPEHHRRNYRDLDRPR). Basic residues-rich tracts occupy residues 224–294 (RSPS…RSHS) and 301–312 (KKSHKKSRRGNE).

Belongs to the PRP38 family. In terms of assembly, component of the spliceosome B complex.

It is found in the nucleus. In terms of biological role, involved in pre-mRNA splicing as a component of the spliceosome. In Xenopus tropicalis (Western clawed frog), this protein is Pre-mRNA-splicing factor 38A (prpf38a).